The following is a 184-amino-acid chain: Endothelial cell-specific molecule 1 (184 aa).

Positions 1 to 19 are cleaved as a signal peptide; that stretch reads MKSVLLLTTLLVPAHLVAA. In terms of domain architecture, IGFBP N-terminal spans 24–102; the sequence is YAVDCPQHCD…GEEFGICKDC (79 aa). 6 cysteine pairs are disulfide-bonded: Cys28/Cys51, Cys32/Cys53, Cys37/Cys54, Cys43/Cys57, Cys65/Cys83, and Cys77/Cys99. The O-linked (Xyl...) (chondroitin sulfate) serine glycan is linked to Ser156.

In terms of assembly, monomer. Post-translationally, may contain intrachain disulfide bonds. In terms of processing, O-glycosylated; contains chondroitin sulfate and dermatan sulfate. In terms of tissue distribution, expressed in lung, on the vascular capillary network within alveolar walls, and also at lower level in kidney.

It is found in the secreted. Functionally, involved in angiogenesis; promotes angiogenic sprouting. May have potent implications in lung endothelial cell-leukocyte interactions. This Homo sapiens (Human) protein is Endothelial cell-specific molecule 1 (ESM1).